The following is a 155-amino-acid chain: Fibroblast growth factor 1 (155 aa).

Ala2 carries the N-acetylalanine modification. Residues 24–27 carry the Nuclear localization signal motif; it reads KKPK. Residues 24–28 and 113–116 contribute to the heparin site; these read KKPKL and ISKK.

Belongs to the heparin-binding growth factors family. In terms of assembly, monomer. Homodimer. Interacts with FGFR1, FGFR2, FGFR3 and FGFR4. Affinity between fibroblast growth factors (FGFs) and their receptors is increased by heparan sulfate glycosaminoglycans that function as coreceptors. Found in a complex with FGFBP1, FGF1 and FGF2. Interacts with FGFBP1. Part of a Cu(2+)-dependent multiprotein aggregate containing FGF1, S100A13 and SYT1. Interacts with S100A13. Interacts with FGFBP1. Interacts with LRRC59. Interacts with CSNKA, CSNKB and FIBP. While binding with LRRC59, CSNKA and FIBP seem mutually exclusive, CSNKB and FIBP may cooperatively interact with FGF1. Interacts with SYT1. Forms a ternary complex with FGFR1 and ITGAV:ITGB3 and induces the recruitment of PTPN11 to the complex. Post-translationally, in the nucleus, phosphorylated by PKC/PRKCD.

It is found in the secreted. Its subcellular location is the cytoplasm. The protein localises to the cell cortex. It localises to the cytosol. The protein resides in the nucleus. Plays an important role in the regulation of cell survival, cell division, angiogenesis, cell differentiation and cell migration. Functions as a potent mitogen in vitro. Acts as a ligand for FGFR1 and integrins. Binds to FGFR1 in the presence of heparin leading to FGFR1 dimerization and activation via sequential autophosphorylation on tyrosine residues which act as docking sites for interacting proteins, leading to the activation of several signaling cascades. Binds to integrin ITGAV:ITGB3. Its binding to integrin, subsequent ternary complex formation with integrin and FGFR1, and the recruitment of PTPN11 to the complex are essential for FGF1 signaling. Induces the phosphorylation and activation of FGFR1, FRS2, MAPK3/ERK1, MAPK1/ERK2 and AKT1. Can induce angiogenesis. The sequence is that of Fibroblast growth factor 1 (FGF1) from Bos taurus (Bovine).